A 126-amino-acid chain; its full sequence is Holo-[acyl-carrier-protein] synthase (126 aa).

The Mg(2+) site is built by D9 and E58.

Belongs to the P-Pant transferase superfamily. AcpS family. It depends on Mg(2+) as a cofactor.

Its subcellular location is the cytoplasm. The enzyme catalyses apo-[ACP] + CoA = holo-[ACP] + adenosine 3',5'-bisphosphate + H(+). Functionally, transfers the 4'-phosphopantetheine moiety from coenzyme A to a Ser of acyl-carrier-protein. This Hamiltonella defensa subsp. Acyrthosiphon pisum (strain 5AT) protein is Holo-[acyl-carrier-protein] synthase.